Consider the following 229-residue polypeptide: Interleukin-22 receptor subunit alpha-2 (229 aa).

Residues Met1 to Glu19 form the signal peptide. Fibronectin type-III domains lie at Lys28 to Asp127 and Pro128 to Pro229. Residue Asn54 is glycosylated (N-linked (GlcNAc...) asparagine). Intrachain disulfides connect Cys76-Cys84 and Cys204-Cys225.

Belongs to the type II cytokine receptor family.

Its subcellular location is the secreted. Its function is as follows. Receptor for IL22. Binds to IL22, prevents interaction with the functional IL-22R complex and blocks the activity of IL22 (in vitro). May play an important role as an IL22 antagonist in the regulation of inflammatory responses. This chain is Interleukin-22 receptor subunit alpha-2 (Il22ra2), found in Rattus norvegicus (Rat).